The following is a 435-amino-acid chain: Estrogen-related receptor gamma (435 aa).

A disordered region spans residues 1-64; that stretch reads MSNKDRHIDS…GLDSPPLYPS (64 aa). The segment covering 10-29 has biased composition (polar residues); the sequence is SSCSSFIKTEPSSPASLTDS. Low complexity predominate over residues 34-47; it reads SPGGSSDASGSYSS. Positions 102–177 form a DNA-binding region, nuclear receptor; it reads KRLCLVCGDI…VGMLKEGVRL (76 aa). 2 NR C4-type zinc fingers span residues 105-125 and 141-160; these read CLVC…CEAC and CPAT…CQAC. Residues 210–434 form the NR LBD domain; that stretch reads PYNKIVSHLL…KLFSEMLEAK (225 aa).

The protein belongs to the nuclear hormone receptor family. NR3 subfamily. In terms of assembly, homodimer. Interacts with NRIP1, NCOA1 and NCOR2. Binds TLE1, PNRC1 and PNRC2. Binds GRIP1. In terms of processing, acetylated by PCAF/KAT2 (in vitro).

Its subcellular location is the nucleus. Its function is as follows. Orphan receptor that acts as a transcription activator in the absence of bound ligand. Binds specifically to an estrogen response element and activates reporter genes controlled by estrogen response elements. Induces the expression of PERM1 in the skeletal muscle. In Pongo abelii (Sumatran orangutan), this protein is Estrogen-related receptor gamma (ESRRG).